The primary structure comprises 143 residues: Papain inhibitor (143 aa).

The signal sequence occupies residues 1–33 (MREFRRVRRVRFAACALVAAATGITLAAGPASA).

Monomer.

The protein resides in the secreted. Its function is as follows. Stress protein produced under hyperthermal stress conditions. Serves as a glutamine and lysine donor substrate for transglutaminase. Inhibits the cysteine proteases papain and bromelain as well as the bovine serine protease trypsin. Has hardly any or no effect on subtilisin, bovine chymotrypsin, proteinase K from T.album, transglutaminase-activating metalloproteinase (TAMEP) from S.mobaraensis, dispase from B.polymyxa, thermolysin from B.thermoproteolyticus or collagenase from C.histolyticum. The protein is Papain inhibitor (pi) of Streptomyces mobaraensis (Streptoverticillium mobaraense).